The following is a 412-amino-acid chain: Tyrosine--tRNA ligase (412 aa).

Tyr-31 is an L-tyrosine binding site. The 'HIGH' region signature appears at 36 to 45; the sequence is PTAASLHIGH. L-tyrosine-binding residues include Tyr-162 and Gln-166. The 'KMSKS' region signature appears at 222–226; sequence KIGKT. Lys-225 contacts ATP. In terms of domain architecture, S4 RNA-binding spans 345–412; sequence KRWIDLFVGV…KKKKLVLHLI (68 aa).

It belongs to the class-I aminoacyl-tRNA synthetase family. TyrS type 1 subfamily. As to quaternary structure, homodimer.

The protein resides in the cytoplasm. The catalysed reaction is tRNA(Tyr) + L-tyrosine + ATP = L-tyrosyl-tRNA(Tyr) + AMP + diphosphate + H(+). In terms of biological role, catalyzes the attachment of tyrosine to tRNA(Tyr) in a two-step reaction: tyrosine is first activated by ATP to form Tyr-AMP and then transferred to the acceptor end of tRNA(Tyr). The polypeptide is Tyrosine--tRNA ligase (Chlamydia caviae (strain ATCC VR-813 / DSM 19441 / 03DC25 / GPIC) (Chlamydophila caviae)).